Consider the following 156-residue polypeptide: Small ribosomal subunit protein uS7 (156 aa).

This sequence belongs to the universal ribosomal protein uS7 family. As to quaternary structure, part of the 30S ribosomal subunit. Contacts proteins S9 and S11.

Its function is as follows. One of the primary rRNA binding proteins, it binds directly to 16S rRNA where it nucleates assembly of the head domain of the 30S subunit. Is located at the subunit interface close to the decoding center, probably blocks exit of the E-site tRNA. The polypeptide is Small ribosomal subunit protein uS7 (Streptomyces griseus subsp. griseus (strain JCM 4626 / CBS 651.72 / NBRC 13350 / KCC S-0626 / ISP 5235)).